The sequence spans 384 residues: Autophagy-related protein 25 (384 aa).

Coiled coils occupy residues 132–236 (KETA…RRAS) and 342–379 (KKNNQTDKDQEIASLRNRLSEMEQNYERVLATMEQWKT). The segment at 224 to 247 (ESRLSNMNKRRASPRDDAEAEPKR) is disordered. Residues 236-247 (SPRDDAEAEPKR) show a composition bias toward basic and acidic residues.

Belongs to the ADIP family.

It is found in the preautophagosomal structure membrane. Its function is as follows. Specifically required for selective degradation of peroxisomes via macropexophagy. This is Autophagy-related protein 25 (ATG25) from Pichia angusta (Yeast).